The sequence spans 399 residues: 4-hydroxy-3-methylbut-2-enyl diphosphate reductase (399 aa).

C66 contributes to the [4Fe-4S] cluster binding site. H96 is a (2E)-4-hydroxy-3-methylbut-2-enyl diphosphate binding site. H96 provides a ligand contact to dimethylallyl diphosphate. H96 contacts isopentenyl diphosphate. C157 is a binding site for [4Fe-4S] cluster. H185 is a (2E)-4-hydroxy-3-methylbut-2-enyl diphosphate binding site. H185 provides a ligand contact to dimethylallyl diphosphate. H185 serves as a coordination point for isopentenyl diphosphate. E187 (proton donor) is an active-site residue. T250 serves as a coordination point for (2E)-4-hydroxy-3-methylbut-2-enyl diphosphate. A [4Fe-4S] cluster-binding site is contributed by C288. (2E)-4-hydroxy-3-methylbut-2-enyl diphosphate-binding residues include S317, S318, N319, and S380. Positions 317, 318, 319, and 380 each coordinate dimethylallyl diphosphate. The isopentenyl diphosphate site is built by S317, S318, N319, and S380.

This sequence belongs to the IspH family. It depends on [4Fe-4S] cluster as a cofactor.

The enzyme catalyses isopentenyl diphosphate + 2 oxidized [2Fe-2S]-[ferredoxin] + H2O = (2E)-4-hydroxy-3-methylbut-2-enyl diphosphate + 2 reduced [2Fe-2S]-[ferredoxin] + 2 H(+). It catalyses the reaction dimethylallyl diphosphate + 2 oxidized [2Fe-2S]-[ferredoxin] + H2O = (2E)-4-hydroxy-3-methylbut-2-enyl diphosphate + 2 reduced [2Fe-2S]-[ferredoxin] + 2 H(+). It functions in the pathway isoprenoid biosynthesis; dimethylallyl diphosphate biosynthesis; dimethylallyl diphosphate from (2E)-4-hydroxy-3-methylbutenyl diphosphate: step 1/1. Its pathway is isoprenoid biosynthesis; isopentenyl diphosphate biosynthesis via DXP pathway; isopentenyl diphosphate from 1-deoxy-D-xylulose 5-phosphate: step 6/6. Its function is as follows. Catalyzes the conversion of 1-hydroxy-2-methyl-2-(E)-butenyl 4-diphosphate (HMBPP) into a mixture of isopentenyl diphosphate (IPP) and dimethylallyl diphosphate (DMAPP). Acts in the terminal step of the DOXP/MEP pathway for isoprenoid precursor biosynthesis. In Synechococcus sp. (strain CC9605), this protein is 4-hydroxy-3-methylbut-2-enyl diphosphate reductase.